The primary structure comprises 108 residues: UPF0145 protein ACIAD2946 (108 aa).

It belongs to the UPF0145 family.

This is UPF0145 protein ACIAD2946 from Acinetobacter baylyi (strain ATCC 33305 / BD413 / ADP1).